Reading from the N-terminus, the 1454-residue chain is Serine/threonine-protein kinase VPS15 (1454 aa).

Glycine 2 carries the N-myristoyl glycine lipid modification. The Protein kinase domain occupies 27-300 (VHYVSQLNSS…LLNKYRGIFF (274 aa)). Residues 33-41 (LNSSRFLKT) and lysine 54 contribute to the ATP site. Aspartate 147 (proton acceptor) is an active-site residue. 4 HEAT repeats span residues 460–497 (NKID…SVRK), 576–613 (KLIQ…FFGR), 615–652 (RTND…LLGT), and 654–691 (TLEQ…TGLI). 6 WD repeats span residues 1078-1118 (NEPN…VGEV), 1126-1165 (DCSS…QESE), 1229-1268 (PRHG…LIRS), 1275-1315 (APIT…CQYA), 1344-1382 (RSLN…SSKA), and 1422-1454 (YHHD…GIFQ).

Belongs to the protein kinase superfamily. Ser/Thr protein kinase family. As to quaternary structure, component of the autophagy-specific VPS34 PI3-kinase complex I composed of VPS15, VPS30, VPS34, ATG14 and ATG38; and of the VPS34 PI3-kinase complex II composed of VPS15, VPS30, VPS34 and VPS38. Interacts directly with ATG14 and GPA1. Interacts directly with VPS34. Autophosphorylated.

It localises to the golgi apparatus. The protein localises to the trans-Golgi network membrane. It is found in the endosome membrane. It catalyses the reaction L-seryl-[protein] + ATP = O-phospho-L-seryl-[protein] + ADP + H(+). The catalysed reaction is L-threonyl-[protein] + ATP = O-phospho-L-threonyl-[protein] + ADP + H(+). In terms of biological role, serine/threonine-protein kinase required for cytoplasm to vacuole transport (Cvt) and autophagy as a part of the autophagy-specific VPS34 PI3-kinase complex I. This complex is essential to recruit the ATG8-phosphatidylinositol conjugate and the ATG12-ATG5 conjugate to the pre-autophagosomal structure. Is also involved in endosome-to-Golgi retrograde transport as part of the VPS34 PI3-kinase complex II. This second complex is required for the endosome-to-Golgi retrieval of PEP1 and KEX2, and the recruitment of VPS5 and VPS7, two components of the retromer complex, to endosomal membranes (probably through the synthesis of a specific pool of phosphatidylinositol 3-phosphate recruiting the retromer to the endosomes). By regulating VPS34 kinase activity, VPS15 appears to be essential for the efficient delivery of soluble hydrolases to the yeast vacuole. May function as a G protein beta subunit to propagate the pheromone response at the endosome with GPA1. In Saccharomyces cerevisiae (strain ATCC 204508 / S288c) (Baker's yeast), this protein is Serine/threonine-protein kinase VPS15.